The primary structure comprises 457 residues: Tubulin beta chain (457 aa).

Residues Gln11, Glu69, Ser138, Gly142, Thr143, Gly144, Asn204, and Asn226 each contribute to the GTP site. Glu69 provides a ligand contact to Mg(2+). The disordered stretch occupies residues Glu431 to Ala457.

The protein belongs to the tubulin family. In terms of assembly, dimer of alpha and beta chains. A typical microtubule is a hollow water-filled tube with an outer diameter of 25 nm and an inner diameter of 15 nM. Alpha-beta heterodimers associate head-to-tail to form protofilaments running lengthwise along the microtubule wall with the beta-tubulin subunit facing the microtubule plus end conferring a structural polarity. Microtubules usually have 13 protofilaments but different protofilament numbers can be found in some organisms and specialized cells. Requires Mg(2+) as cofactor.

It localises to the cytoplasm. The protein localises to the cytoskeleton. In terms of biological role, tubulin is the major constituent of microtubules, a cylinder consisting of laterally associated linear protofilaments composed of alpha- and beta-tubulin heterodimers. Microtubules grow by the addition of GTP-tubulin dimers to the microtubule end, where a stabilizing cap forms. Below the cap, tubulin dimers are in GDP-bound state, owing to GTPase activity of alpha-tubulin. This chain is Tubulin beta chain (TUBB1), found in Porphyra purpurea (Red seaweed).